The following is a 255-amino-acid chain: NAD kinase (255 aa).

The active-site Proton acceptor is aspartate 44. NAD(+) contacts are provided by residues 44–45, histidine 49, 114–115, aspartate 144, alanine 152, 155–160, and glutamine 216; these read DG, NE, and SAYNLS.

It belongs to the NAD kinase family. A divalent metal cation serves as cofactor.

It is found in the cytoplasm. It carries out the reaction NAD(+) + ATP = ADP + NADP(+) + H(+). Its function is as follows. Involved in the regulation of the intracellular balance of NAD and NADP, and is a key enzyme in the biosynthesis of NADP. Catalyzes specifically the phosphorylation on 2'-hydroxyl of the adenosine moiety of NAD to yield NADP. In Rickettsia akari (strain Hartford), this protein is NAD kinase.